The following is a 486-amino-acid chain: Protein ZINC INDUCED FACILITATOR 1 (486 aa).

12 consecutive transmembrane segments (helical) span residues 41–61 (FVWI…PFLY), 82–102 (FVGC…GIVA), 109–129 (PIIL…GLSS), 131–151 (FWMA…LGTM), 170–190 (AVST…GFLA), 212–232 (ALPC…CCFI), 288–308 (IIVY…FALW), 327–347 (TVLA…YPLA), 362–384 (ALMI…SLSL), 391–408 (ILIN…LILQ), 423–443 (IAMT…GILF), and 461–481 (VFFV…KPFL).

The protein belongs to the major facilitator superfamily. As to expression, strongly expressed in developing leaves, differentiating zones of root tips and sepals of developing flowers. Restricted to vascular tissues in older leaves, mature roots, flowers, anthers and filaments. Not expressed in developing anthers.

It localises to the vacuole membrane. Functionally, major facilitator superfamily (MFS) transporter involved in zinc tolerance by participating in vacuolar sequestration of zinc. The sequence is that of Protein ZINC INDUCED FACILITATOR 1 (ZIF1) from Arabidopsis thaliana (Mouse-ear cress).